A 191-amino-acid chain; its full sequence is Potassium-transporting ATPase KdpC subunit (191 aa).

A helical membrane pass occupies residues 6 to 26 (PALVLFILLTLLTGGVYPLLT).

This sequence belongs to the KdpC family. The system is composed of three essential subunits: KdpA, KdpB and KdpC.

The protein resides in the cell inner membrane. Part of the high-affinity ATP-driven potassium transport (or Kdp) system, which catalyzes the hydrolysis of ATP coupled with the electrogenic transport of potassium into the cytoplasm. This subunit acts as a catalytic chaperone that increases the ATP-binding affinity of the ATP-hydrolyzing subunit KdpB by the formation of a transient KdpB/KdpC/ATP ternary complex. The sequence is that of Potassium-transporting ATPase KdpC subunit from Klebsiella pneumoniae (strain 342).